The sequence spans 429 residues: MAAQGYGYYRTVIFSAMFGGYSLYYFNRKTFSFVMPSLVEEIPLDKDDLGFITSSQSAAYAISKFVSGVLSDQMSARWLFSSGLLLVGLVNIFFAWSSTVPVFAALWFLNGLAQGLGWPPCGKVLRKWFEPSQFGTWWAILSTSMNLAGGLGPILATILAQSYSWRSTLALSGALCVVVSFLCLLLIHNEPADVGLRNLDPMPSEGKKGSLKEESTLQELLLSPYLWVLSTGYLVVFGVKTCCTDWGQFFLIQEKGQSALVGSSYMSALEVGGLVGSIAAGYLSDRAMAKAGLSNYGNPRHGLLLFMMAGMTVSMYLFRVTVTSDSPKLWILVLGAVFGFSSYGPIALFGVIANESAPPNLCGTSHAIVGLMANVGGFLAGLPFSTIAKHYSWSTAFWVAEVICAASTAAFFLLRNIRTKMGRVSKKAE.

10 helical membrane passes run 84–104, 105–125, 139–159, 167–187, 219–239, 260–280, 302–322, 329–349, 368–388, and 394–414; these read LLLVGLVNIFFAWSSTVPVFA, ALWFLNGLAQGLGWPPCGKVL, AILSTSMNLAGGLGPILATIL, STLALSGALCVVVSFLCLLLI, ELLLSPYLWVLSTGYLVVFGV, LVGSSYMSALEVGGLVGSIAA, GLLLFMMAGMTVSMYLFRVTV, LWILVLGAVFGFSSYGPIALF, IVGLMANVGGFLAGLPFSTIA, and STAFWVAEVICAASTAAFFLL.

The protein belongs to the major facilitator superfamily. Organophosphate:Pi antiporter (OPA) (TC 2.A.1.4) family. Mostly expressed in liver and kidney.

It is found in the endoplasmic reticulum membrane. The enzyme catalyses D-glucose 6-phosphate(in) + phosphate(out) = D-glucose 6-phosphate(out) + phosphate(in). Inhibited by vanadate and chlorogenic acid. In terms of biological role, inorganic phosphate and glucose-6-phosphate antiporter of the endoplasmic reticulum. Transports cytoplasmic glucose-6-phosphate into the lumen of the endoplasmic reticulum and translocates inorganic phosphate into the opposite direction. Forms with glucose-6-phosphatase the complex responsible for glucose production through glycogenolysis and gluconeogenesis. Hence, it plays a central role in homeostatic regulation of blood glucose levels. In Homo sapiens (Human), this protein is Glucose-6-phosphate exchanger SLC37A4.